A 364-amino-acid chain; its full sequence is Methylthioribose-1-phosphate isomerase (364 aa).

Substrate is bound by residues 53–55 (RGA), Arg90, and Gln203. Residue Asp244 is the Proton donor of the active site. Residue 254-255 (NK) coordinates substrate.

This sequence belongs to the eIF-2B alpha/beta/delta subunits family. MtnA subfamily.

The catalysed reaction is 5-(methylsulfanyl)-alpha-D-ribose 1-phosphate = 5-(methylsulfanyl)-D-ribulose 1-phosphate. It participates in amino-acid biosynthesis; L-methionine biosynthesis via salvage pathway; L-methionine from S-methyl-5-thio-alpha-D-ribose 1-phosphate: step 1/6. In terms of biological role, catalyzes the interconversion of methylthioribose-1-phosphate (MTR-1-P) into methylthioribulose-1-phosphate (MTRu-1-P). The protein is Methylthioribose-1-phosphate isomerase of Rhizobium meliloti (strain 1021) (Ensifer meliloti).